Reading from the N-terminus, the 419-residue chain is Tol-Pal system protein TolB (419 aa).

Residues 1-19 form the signal peptide; it reads MFNRIISLFLLLFTGQVIA.

The protein belongs to the TolB family. In terms of assembly, the Tol-Pal system is composed of five core proteins: the inner membrane proteins TolA, TolQ and TolR, the periplasmic protein TolB and the outer membrane protein Pal. They form a network linking the inner and outer membranes and the peptidoglycan layer.

Its subcellular location is the periplasm. In terms of biological role, part of the Tol-Pal system, which plays a role in outer membrane invagination during cell division and is important for maintaining outer membrane integrity. The chain is Tol-Pal system protein TolB from Legionella pneumophila subsp. pneumophila (strain Philadelphia 1 / ATCC 33152 / DSM 7513).